The following is a 388-amino-acid chain: Chaperone protein DnaJ (388 aa).

The J domain occupies 4 to 69; sequence DYYDILGVDE…EKRQRYDQFG (66 aa). Basic and acidic residues-rich tracts occupy residues 27–50, 58–73, and 113–124; these read KAME…KEAS, DPEK…HDGV, and GRSERGRGRPGS. Disordered regions lie at residues 27–86 and 99–125; these read KAME…GRGR and SDIF…PGSD. The CR-type zinc finger occupies 140–225; sequence GTEKNLRLQK…CGGEGRVQGE (86 aa). Cys153, Cys156, Cys173, Cys176, Cys199, Cys202, Cys213, and Cys216 together coordinate Zn(2+). 4 CXXCXGXG motif repeats span residues 153–160, 173–180, 199–206, and 213–220; these read CESCDGTG, CPKCDGTG, CPRCEGEG, and CDDCGGEG. The span at 362-376 shows a compositional bias: basic and acidic residues; the sequence is AHDNFQPRPPEEDTQ. The tract at residues 362-388 is disordered; that stretch reads AHDNFQPRPPEEDTQKSFFRRVSDVFS.

This sequence belongs to the DnaJ family. As to quaternary structure, homodimer. It depends on Zn(2+) as a cofactor.

It is found in the cytoplasm. Its function is as follows. Participates actively in the response to hyperosmotic and heat shock by preventing the aggregation of stress-denatured proteins and by disaggregating proteins, also in an autonomous, DnaK-independent fashion. Unfolded proteins bind initially to DnaJ; upon interaction with the DnaJ-bound protein, DnaK hydrolyzes its bound ATP, resulting in the formation of a stable complex. GrpE releases ADP from DnaK; ATP binding to DnaK triggers the release of the substrate protein, thus completing the reaction cycle. Several rounds of ATP-dependent interactions between DnaJ, DnaK and GrpE are required for fully efficient folding. Also involved, together with DnaK and GrpE, in the DNA replication of plasmids through activation of initiation proteins. The sequence is that of Chaperone protein DnaJ from Salinibacter ruber (strain DSM 13855 / M31).